A 1012-amino-acid chain; its full sequence is MSAAHELPIRERLAHWVEHLTHVLPAQAPIRDFVHHNTLHGFQHLPFTEALASAQALTGATTYWPESRFRECLASGRISPDDLSAALDDFGVGDLDQPVVRNLTRRDILLASLRFGCEAPNACRQAWLLDETSLADDPLFAYFCRSVELAPSKGASENWQVQALARWDALCGRVGRTWTWRALLEYLSGEDVLEWTRSILQRHLAAHLDLGVAAWRNPAQGQGFFAAWRASAGLDMAWEMDELPNARDEILHLPDSPLDVLLEELPRLVPDHSQWYGYLERLSLELPGWSGMFLWRDRNPGRGDGTPIAMLDYLTVRVLLERLLTDDLLRRLAGSPLSLAELHAYYAARPEEFLVRAALHEPGLPEDLLGRAAHLVQLAREGHVDVAEWRRLAAALAPAMAAAQDDGAAWQMAGLSRQLGLTPADLEMLSGDDLTALQTCAASLSSLQRGHIWLLAYERHYREQLFSALTANHPRQATPAAPSAQVVMCMDDREEGTRRHLEEIAPDVATYGAAGFFGVPMFWQGLDDAGKTALCPVVVQPTHLLRELPAAGEEGSLAGHAARREKRLRWNERLYQATRRRAVAGPVLTALGAVPALASLLAVTLVPGWFGETARRWREQYEGRVSTRLGLTAEQPVAATPEQPQLGLTDAEQIERVEAFLRMIGLTAGFAPLVLMFGHGSGSQNNPHLSAYDCGACSGKHGGPNARVFAAMANRPAVRAGLAARGLSIPDSTWFVAAEHNTCDDGIEWYDLDSTPERFQAAVDRLLGQMAEACRAHAAERCRRLASAPFKPSPWKARQHMIGRANDISQARPELGHATNAAAFIGRRQMSRGLFLDRRVFLISYDPVGDDDGCIVEGILLAAGPVGAGIALEYYFSTVDNERFGCGSKITHNITGLFGVMEGADSDLRTGLPWQMVEIHEPMRLLVVVEQTPEVLTAIVGRQPPLQELINNEWIIVAAKHPITGAIDLYCPRRGWLPWSGQAVLPQVARSVDWFAGESQPLAPAIILGGVR.

Zn(2+) is bound by residues C489, D491, H679, and C694.

Belongs to the inorganic carbon transporter (TC 9.A.2) DabA family. Forms a complex with DabB. Requires Zn(2+) as cofactor.

Its subcellular location is the cell inner membrane. Part of an energy-coupled inorganic carbon pump. This chain is Probable inorganic carbon transporter subunit DabA, found in Dechloromonas aromatica (strain RCB).